The sequence spans 364 residues: MSEKTIVVLPGDHVGTEITNEAIKVLKAIEEVRPNVKFNFQHHLIGGAAIDATGVPLPDEALEAAKKADAVLLGAVGGPKWGTGAVRPEQGLLKIRKELNLYANLRPCNFASESLLELSPIKAEFAKGTDFTVVRELVGGIYFGERKEDDGSGVASDTETYSVPEVQRITRMAAFMALQHNPPLPIWSLDKANVLASSRLWRKTVTETIEKEFPQLTVQHQLIDSAAMILIKSPTTLNGIVITSNMFGDIISDEASVIPGSLGLLPSASLASLPDTNKAFGLYEPCHGSAPDLPANKVNPIATILSAAMMLKLSLDLFEEGVALEKAVKEVLDAGVRTGDLRGSNSTKEVGDAAVEAAKRILKN.

Residue 78–89 (GPKWGTGAVRPE) participates in NAD(+) binding. Substrate contacts are provided by Arg96, Arg106, Arg135, and Asp224. 3 residues coordinate Mg(2+): Asp224, Asp249, and Asp253. NAD(+) is bound at residue 288-299 (GSAPDLPANKVN).

Belongs to the isocitrate and isopropylmalate dehydrogenases family. Homodimer. Requires Mg(2+) as cofactor. It depends on Mn(2+) as a cofactor.

The protein resides in the cytoplasm. It catalyses the reaction (2R,3S)-3-isopropylmalate + NAD(+) = 4-methyl-2-oxopentanoate + CO2 + NADH. It participates in amino-acid biosynthesis; L-leucine biosynthesis; L-leucine from 3-methyl-2-oxobutanoate: step 3/4. Its function is as follows. Catalyzes the oxidation of 3-carboxy-2-hydroxy-4-methylpentanoate (3-isopropylmalate) to 3-carboxy-4-methyl-2-oxopentanoate. The product decarboxylates to 4-methyl-2 oxopentanoate. The polypeptide is 3-isopropylmalate dehydrogenase (LEU2) (Wickerhamomyces anomalus (strain ATCC 8168 / CBS 5759 / DSM 6766 / JCM 3585 / IAM 12210 / NCYC 432 / NBRC 10213 / NRRL Y-366 / AJ 5027) (Yeast)).